Reading from the N-terminus, the 417-residue chain is Serpin A3-7 (417 aa).

The N-terminal stretch at 1–25 (MRTERTSFLLALGLLVSGFCSRVHC) is a signal peptide. 4 N-linked (GlcNAc...) asparagine glycosylation sites follow: Asn-103, Asn-183, Asn-221, and Asn-267.

The protein belongs to the serpin family. Homodimer.

Its subcellular location is the cytoplasmic vesicle. The protein resides in the secretory vesicle. It is found in the chromaffin granule. It localises to the secreted. Functionally, serine protease inhibitor. The protein is Serpin A3-7 of Bos taurus (Bovine).